We begin with the raw amino-acid sequence, 362 residues long: MRTVGVEEELLLVDPETGEPKALSTAVLARAEQVDPDQDVFEKELHGQMLEFATHPQTDMAALGAEIVRCRKEAARHAGEAGCAVAALATSPLPVSPSIAMNRRYQWMAEQYGIAMQEQLTCGCHVHVAVESDEEGVAVVDRIRPWLPVLVALSANSPFWQGRDSSYESYRSRVWGRWPSAGPTELFGSPERYHRQVADMVATGVILDDGMVYFDARLSHRYPTVEIRVADVCLHPDTAQLIATLARGLVESAARDWRAGREPEDHSVSLLRLAAWQAARAGLSGELLHPVTMRRLRAESVVRALLEHVGDALADAGDLDLAHEAVAELLERGNGARVQRELLERTGSLRDTVTECVRQTQG.

Belongs to the glutamate--cysteine ligase type 2 family. YbdK subfamily.

It carries out the reaction L-cysteine + L-glutamate + ATP = gamma-L-glutamyl-L-cysteine + ADP + phosphate + H(+). ATP-dependent carboxylate-amine ligase which exhibits weak glutamate--cysteine ligase activity. This is Putative glutamate--cysteine ligase 2-1 from Streptomyces avermitilis (strain ATCC 31267 / DSM 46492 / JCM 5070 / NBRC 14893 / NCIMB 12804 / NRRL 8165 / MA-4680).